A 90-amino-acid polypeptide reads, in one-letter code: Probable Fe(2+)-trafficking protein (90 aa).

This sequence belongs to the Fe(2+)-trafficking protein family.

Its function is as follows. Could be a mediator in iron transactions between iron acquisition and iron-requiring processes, such as synthesis and/or repair of Fe-S clusters in biosynthetic enzymes. The polypeptide is Probable Fe(2+)-trafficking protein (Vibrio vulnificus (strain CMCP6)).